A 266-amino-acid polypeptide reads, in one-letter code: Methyl-coenzyme M reductase II subunit gamma (266 aa).

A coenzyme M-binding site is contributed by Arg123.

This sequence belongs to the methyl-coenzyme M reductase gamma subunit family. MCR is a hexamer of two alpha, two beta, and two gamma chains, forming a dimer of heterotrimers. It depends on coenzyme F430 as a cofactor.

It catalyses the reaction coenzyme B + methyl-coenzyme M = methane + coenzyme M-coenzyme B heterodisulfide. It participates in one-carbon metabolism; methyl-coenzyme M reduction; methane from methyl-coenzyme M: step 1/1. Its function is as follows. Component of the methyl-coenzyme M reductase (MCR) I that catalyzes the reductive cleavage of methyl-coenzyme M (CoM-S-CH3 or 2-(methylthio)ethanesulfonate) using coenzyme B (CoB or 7-mercaptoheptanoylthreonine phosphate) as reductant which results in the production of methane and the mixed heterodisulfide of CoB and CoM (CoM-S-S-CoB). This is the final step in methanogenesis. The protein is Methyl-coenzyme M reductase II subunit gamma (mrtG) of Methanocaldococcus jannaschii (strain ATCC 43067 / DSM 2661 / JAL-1 / JCM 10045 / NBRC 100440) (Methanococcus jannaschii).